A 121-amino-acid polypeptide reads, in one-letter code: Large ribosomal subunit protein uL14c (121 aa).

Belongs to the universal ribosomal protein uL14 family. In terms of assembly, part of the 50S ribosomal subunit.

It localises to the plastid. Its subcellular location is the chloroplast. In terms of biological role, binds to 23S rRNA. The protein is Large ribosomal subunit protein uL14c of Trieres chinensis (Marine centric diatom).